Reading from the N-terminus, the 252-residue chain is 5-oxoprolinase subunit A 1 (252 aa).

Belongs to the LamB/PxpA family. Forms a complex composed of PxpA, PxpB and PxpC.

It carries out the reaction 5-oxo-L-proline + ATP + 2 H2O = L-glutamate + ADP + phosphate + H(+). Its function is as follows. Catalyzes the cleavage of 5-oxoproline to form L-glutamate coupled to the hydrolysis of ATP to ADP and inorganic phosphate. The polypeptide is 5-oxoprolinase subunit A 1 (Pseudomonas aeruginosa (strain ATCC 15692 / DSM 22644 / CIP 104116 / JCM 14847 / LMG 12228 / 1C / PRS 101 / PAO1)).